The sequence spans 867 residues: Retinoblastoma-related protein 1 (867 aa).

The interval 275-476 (TPVTSAMTTA…EKGSSLYNSL (202 aa)) is domain A. The tract at residues 275 to 722 (TPVTSAMTTA…NEVFVPAAKP (448 aa)) is pocket; binds RPD3I and RBAP1. The spacer stretch occupies residues 477-594 (IVARPSVASE…PVGGNEKCAD (118 aa)). The tract at residues 512–563 (EGLPATPSKKRAAGPDDNADPRSPKRSCNESRNTVVERNLQTPPPKQSHMVS) is disordered. A compositionally biased stretch (basic and acidic residues) spans 530 to 540 (ADPRSPKRSCN). Over residues 541 to 552 (ESRNTVVERNLQ) the composition is skewed to polar residues. Residues 595–722 (VTIHIFFSKI…NEVFVPAAKP (128 aa)) are domain B. Disordered stretches follow at residues 734 to 762 (PEDK…MSPK) and 843 to 867 (QING…ETDT).

Belongs to the retinoblastoma protein (RB) family. Interacts with RPD3I, RBAP1, the Arabidopsis cyclin CYCD3-1, the mastrevirus replication-associated protein A (RepA) and the begomovirus replication-associated protein (Rep). In terms of tissue distribution, ubiquitous.

Its subcellular location is the nucleus. In terms of biological role, regulator of biological processes that recruits a histone deacetylase to control gene transcription. May play a role in the entry into mitosis, negatively regulating the cell proliferation. Formation of stable complexes with geminiviridae replication-associated proteins may create a cellular environment which favors viral DNA replication. This chain is Retinoblastoma-related protein 1 (RBR1), found in Zea mays (Maize).